The chain runs to 404 residues: N-acetylglucosamine-6-phosphate deacetylase (404 aa).

Residue glutamate 143 participates in a divalent metal cation binding. 154–155 lines the substrate pocket; the sequence is AH. Residues histidine 211 and histidine 232 each contribute to the a divalent metal cation site. Substrate-binding positions include 235-236, arginine 243, and 269-272; these read NA and DGIH. Aspartate 294 serves as the catalytic Proton donor/acceptor. 328–330 is a binding site for substrate; it reads LSG.

This sequence belongs to the metallo-dependent hydrolases superfamily. NagA family. The cofactor is a divalent metal cation.

The catalysed reaction is N-acetyl-D-glucosamine 6-phosphate + H2O = D-glucosamine 6-phosphate + acetate. It participates in amino-sugar metabolism; N-acetylneuraminate degradation. Hydrolyzes the N-glycolyl group from N-glycolylglucosamine 6-phosphate (GlcNGc-6-P) in the N-glycolylneuraminic acid (Neu5Gc) degradation pathway. In Danio rerio (Zebrafish), this protein is N-acetylglucosamine-6-phosphate deacetylase (amdhd2).